We begin with the raw amino-acid sequence, 319 residues long: Taste receptor type 2 member 30 (319 aa).

Residue Met1 is a topological domain, extracellular. The helical transmembrane segment at 2–22 threads the bilayer; it reads ITFLPIIFSILIVVIFVIGNF. The Cytoplasmic portion of the chain corresponds to 23-46; the sequence is ANGFIALVNSIEWVKRQKISFADQ. A helical transmembrane segment spans residues 47 to 67; sequence ILIALAVSRVGLLWALLLHWY. The Extracellular portion of the chain corresponds to 68-86; it reads ATELNLAFYSVEVRITAYN. The helical transmembrane segment at 87–107 threads the bilayer; the sequence is VWAVTNHFSNWLATSLSMFYL. The Cytoplasmic segment spans residues 108-126; that stretch reads LKIANFSNLIFLRIKRRVK. The chain crosses the membrane as a helical span at residues 127–147; the sequence is SVILVILLGPLLFLVCHLFVI. Over 148–178 the chain is Extracellular; that stretch reads NMNEIVWTKEYEGNLTWKIKLRNAVFLSNMT. Residues Asn161 and Asn176 are each glycosylated (N-linked (GlcNAc...) asparagine). A helical membrane pass occupies residues 179–199; sequence LTMLANFVPLTLTLISFLLLI. Residues 200-229 lie on the Cytoplasmic side of the membrane; the sequence is CSLCKHLKKMQLHGKGSQDPSTKVHIKALQ. Residues 230 to 250 form a helical membrane-spanning segment; it reads TVTCFLLLCAIYFLSMIISVY. Residues 251-259 are Extracellular-facing; the sequence is NFGRLEKKP. The helical transmembrane segment at 260 to 280 threads the bilayer; that stretch reads VFMFCQAITFSYPSTHAFILI. Topologically, residues 281–319 are cytoplasmic; sequence WGNKKLKQIFLSVLWHVRYWVKDRSLRLHRFTRAALCKG.

This sequence belongs to the G-protein coupled receptor T2R family.

The protein resides in the membrane. Functionally, receptor that may play a role in the perception of bitterness and is gustducin-linked. May play a role in sensing the chemical composition of the gastrointestinal content. The activity of this receptor may stimulate alpha gustducin, mediate PLC-beta-2 activation and lead to the gating of TRPM5. In Pongo pygmaeus (Bornean orangutan), this protein is Taste receptor type 2 member 30 (TAS2R30).